Reading from the N-terminus, the 327-residue chain is Gibberellin 2-beta-dioxygenase 1 (327 aa).

In terms of domain architecture, Fe2OG dioxygenase spans 171-276; it reads QSDCLFRVNH…RLSMIYFCGP (106 aa). Residues His-200, Asp-202, and His-257 each coordinate Fe cation. Arg-267 is a catalytic residue.

Belongs to the iron/ascorbate-dependent oxidoreductase family. GA2OX subfamily. Fe cation serves as cofactor. As to expression, predominantly expressed in roots, flowers, young fruits and seeds.

The catalysed reaction is gibberellin A1 + 2-oxoglutarate + O2 = gibberellin A8 + succinate + CO2. It participates in plant hormone biosynthesis; gibberellin biosynthesis. Catalyzes the 2-beta-hydroxylation of several biologically active gibberellins, leading to the homeostatic regulation of their endogenous level. Catabolism of gibberellins (GAs) plays a central role in plant development. Converts GA9/GA20 to GA51/GA29 and GA4/GA1 to GA34/GA8. This is Gibberellin 2-beta-dioxygenase 1 (GA2OX1) from Pisum sativum (Garden pea).